A 378-amino-acid polypeptide reads, in one-letter code: MLKQLKNYRRIVVKIGSALLVDRAAGLKRDWLESLGQDIAALHHAGVEVLVVSSGAIALGRTVLGLPKKALKLEESQAAAAAGQIALAKAYADVLGGHSIRSGQILVTLSDTEERRRYLNARATIETLLKLKAVPVINENDTVATTEIRYGDNDRLAARVATMMGADLLVLLSDIDGLYTAPPHKNPDAEFLPLVETITPQIEAMAGAAASELSRGGMKTKLDAGKIANAAGTAMIITSGTRFGPLSAIDRGERATLFEPARAPVNAWKTWISGNLEPAGRLTVDAGAAKALKSGKSLLPAGVKEIDGQFERGDTVAVLNEDGREIARGLIAYDAEDARKIAGHKSDEISEILGYDARAAMIHRNDLVVRAASNAEVA.

ATP is bound at residue lysine 14. Substrate contacts are provided by serine 54, aspartate 141, and asparagine 153. Residue 173 to 174 coordinates ATP; the sequence is SD. One can recognise a PUA domain in the interval 279 to 356; that stretch reads AGRLTVDAGA…DEISEILGYD (78 aa).

It belongs to the glutamate 5-kinase family.

The protein localises to the cytoplasm. It catalyses the reaction L-glutamate + ATP = L-glutamyl 5-phosphate + ADP. It participates in amino-acid biosynthesis; L-proline biosynthesis; L-glutamate 5-semialdehyde from L-glutamate: step 1/2. In terms of biological role, catalyzes the transfer of a phosphate group to glutamate to form L-glutamate 5-phosphate. This is Glutamate 5-kinase from Brucella anthropi (strain ATCC 49188 / DSM 6882 / CCUG 24695 / JCM 21032 / LMG 3331 / NBRC 15819 / NCTC 12168 / Alc 37) (Ochrobactrum anthropi).